The sequence spans 249 residues: Coproheme decarboxylase (249 aa).

Residues Arg-131, 145-149, His-172, and Gln-185 contribute to the Fe-coproporphyrin III site; that span reads YPMDK. Residue Tyr-145 is part of the active site.

Belongs to the ChdC family. Type 1 subfamily. The cofactor is Fe-coproporphyrin III.

It catalyses the reaction Fe-coproporphyrin III + 2 H2O2 + 2 H(+) = heme b + 2 CO2 + 4 H2O. It carries out the reaction Fe-coproporphyrin III + H2O2 + H(+) = harderoheme III + CO2 + 2 H2O. The catalysed reaction is harderoheme III + H2O2 + H(+) = heme b + CO2 + 2 H2O. The protein operates within porphyrin-containing compound metabolism; protoheme biosynthesis. Functionally, involved in coproporphyrin-dependent heme b biosynthesis. Catalyzes the decarboxylation of Fe-coproporphyrin III (coproheme) to heme b (protoheme IX), the last step of the pathway. The reaction occurs in a stepwise manner with a three-propionate intermediate. This is Coproheme decarboxylase from Staphylococcus epidermidis (strain ATCC 35984 / DSM 28319 / BCRC 17069 / CCUG 31568 / BM 3577 / RP62A).